The sequence spans 394 residues: Elongation factor Tu 1 (394 aa).

Positions 10–204 (KPHVNVGTIG…ALDSYIPEPE (195 aa)) constitute a tr-type G domain. Residues 19–26 (GHVDHGKT) are G1. Residue 19–26 (GHVDHGKT) coordinates GTP. Residue T26 participates in Mg(2+) binding. A G2 region spans residues 60 to 64 (GITIS). Residues 81 to 84 (DCPG) form a G3 region. GTP contacts are provided by residues 81 to 85 (DCPGH) and 136 to 139 (NKCD). Residues 136–139 (NKCD) form a G4 region. Positions 174–176 (SAL) are G5.

It belongs to the TRAFAC class translation factor GTPase superfamily. Classic translation factor GTPase family. EF-Tu/EF-1A subfamily. In terms of assembly, monomer.

The protein resides in the cytoplasm. The catalysed reaction is GTP + H2O = GDP + phosphate + H(+). Its function is as follows. GTP hydrolase that promotes the GTP-dependent binding of aminoacyl-tRNA to the A-site of ribosomes during protein biosynthesis. This Photorhabdus laumondii subsp. laumondii (strain DSM 15139 / CIP 105565 / TT01) (Photorhabdus luminescens subsp. laumondii) protein is Elongation factor Tu 1.